The following is an 81-amino-acid chain: Photosystem I iron-sulfur center (81 aa).

4Fe-4S ferredoxin-type domains lie at 2–31 (AHTV…MVPW) and 39–68 (MASA…IRVY). The [4Fe-4S] cluster site is built by C11, C14, C17, C21, C48, C51, C54, and C58.

As to quaternary structure, the eukaryotic PSI reaction center is composed of at least 11 subunits. [4Fe-4S] cluster serves as cofactor.

It localises to the plastid. It is found in the chloroplast thylakoid membrane. The catalysed reaction is reduced [plastocyanin] + hnu + oxidized [2Fe-2S]-[ferredoxin] = oxidized [plastocyanin] + reduced [2Fe-2S]-[ferredoxin]. Functionally, apoprotein for the two 4Fe-4S centers FA and FB of photosystem I (PSI); essential for photochemical activity. FB is the terminal electron acceptor of PSI, donating electrons to ferredoxin. The C-terminus interacts with PsaA/B/D and helps assemble the protein into the PSI complex. Required for binding of PsaD and PsaE to PSI. PSI is a plastocyanin/cytochrome c6-ferredoxin oxidoreductase, converting photonic excitation into a charge separation, which transfers an electron from the donor P700 chlorophyll pair to the spectroscopically characterized acceptors A0, A1, FX, FA and FB in turn. This chain is Photosystem I iron-sulfur center, found in Cyanidioschyzon merolae (strain NIES-3377 / 10D) (Unicellular red alga).